A 283-amino-acid polypeptide reads, in one-letter code: Glutamate racemase (283 aa).

Residues 28 to 29 (DS) and 60 to 61 (YG) contribute to the substrate site. Cys92 serves as the catalytic Proton donor/acceptor. 93-94 (NS) serves as a coordination point for substrate. The active-site Proton donor/acceptor is the Cys204. Residue 205–206 (TH) coordinates substrate.

This sequence belongs to the aspartate/glutamate racemases family.

The enzyme catalyses L-glutamate = D-glutamate. It functions in the pathway cell wall biogenesis; peptidoglycan biosynthesis. In terms of biological role, provides the (R)-glutamate required for cell wall biosynthesis. This Erwinia tasmaniensis (strain DSM 17950 / CFBP 7177 / CIP 109463 / NCPPB 4357 / Et1/99) protein is Glutamate racemase.